The primary structure comprises 180 residues: Ribulose bisphosphate carboxylase small subunit, chloroplastic 2 (180 aa).

Residues 1-56 (MASSVMSSAAVATSTNAAQASMVAPFTGLKSAASFPVSRKQNLDITSIASNGGRVQ) constitute a chloroplast transit peptide.

Belongs to the RuBisCO small chain family. Heterohexadecamer of 8 large and 8 small subunits.

It is found in the plastid. The protein resides in the chloroplast. RuBisCO catalyzes two reactions: the carboxylation of D-ribulose 1,5-bisphosphate, the primary event in carbon dioxide fixation, as well as the oxidative fragmentation of the pentose substrate. Both reactions occur simultaneously and in competition at the same active site. Although the small subunit is not catalytic it is essential for maximal activity. This is Ribulose bisphosphate carboxylase small subunit, chloroplastic 2 from Petunia hybrida (Petunia).